Here is a 165-residue protein sequence, read N- to C-terminus: Protein eva-1 homolog B (165 aa).

The helical transmembrane segment at 29 to 49 (GLYFVLGVCFGLLLTLCLLVI) threads the bilayer. Disordered regions lie at residues 57–109 (PRPR…GPLN) and 143–165 (LLGT…MHYY). Over residues 74 to 84 (EPEDDDEDEED) the composition is skewed to acidic residues. Phosphothreonine is present on residues Thr85, Thr148, and Thr158.

This sequence belongs to the EVA1 family.

It localises to the membrane. The sequence is that of Protein eva-1 homolog B (EVA1B) from Homo sapiens (Human).